A 405-amino-acid chain; its full sequence is Tryptophan synthase beta chain (405 aa).

At Lys98 the chain carries N6-(pyridoxal phosphate)lysine.

This sequence belongs to the TrpB family. As to quaternary structure, tetramer of two alpha and two beta chains. It depends on pyridoxal 5'-phosphate as a cofactor.

It carries out the reaction (1S,2R)-1-C-(indol-3-yl)glycerol 3-phosphate + L-serine = D-glyceraldehyde 3-phosphate + L-tryptophan + H2O. The protein operates within amino-acid biosynthesis; L-tryptophan biosynthesis; L-tryptophan from chorismate: step 5/5. The beta subunit is responsible for the synthesis of L-tryptophan from indole and L-serine. The polypeptide is Tryptophan synthase beta chain (Bradyrhizobium diazoefficiens (strain JCM 10833 / BCRC 13528 / IAM 13628 / NBRC 14792 / USDA 110)).